We begin with the raw amino-acid sequence, 878 residues long: Alanine--tRNA ligase (878 aa).

Zn(2+)-binding residues include H564, H568, C666, and H670.

The protein belongs to the class-II aminoacyl-tRNA synthetase family. Homotetramer. Zn(2+) serves as cofactor.

The protein localises to the cytoplasm. The enzyme catalyses tRNA(Ala) + L-alanine + ATP = L-alanyl-tRNA(Ala) + AMP + diphosphate. In terms of biological role, catalyzes the attachment of alanine to tRNA(Ala) in a two-step reaction: alanine is first activated by ATP to form Ala-AMP and then transferred to the acceptor end of tRNA(Ala). Also edits incorrectly charged Ser-tRNA(Ala) and Gly-tRNA(Ala) via its editing domain. This Buchnera aphidicola subsp. Acyrthosiphon pisum (strain APS) (Acyrthosiphon pisum symbiotic bacterium) protein is Alanine--tRNA ligase.